A 60-amino-acid chain; its full sequence is Short neurotoxin 1 (60 aa).

4 disulfide bridges follow: Cys3/Cys22, Cys17/Cys39, Cys41/Cys52, and Cys53/Cys58.

It belongs to the three-finger toxin family. Short-chain subfamily. Type I alpha-neurotoxin sub-subfamily. As to expression, expressed by the venom gland.

It is found in the secreted. Binds to muscle nicotinic acetylcholine receptor (nAChR) and inhibit acetylcholine from binding to the receptor, thereby impairing neuromuscular transmission. The chain is Short neurotoxin 1 from Hydrophis cyanocinctus (Asian annulated sea snake).